Reading from the N-terminus, the 224-residue chain is Ribosomal RNA small subunit methyltransferase G (224 aa).

S-adenosyl-L-methionine is bound by residues Gly89, Leu94, 140–141 (IE), and Arg154.

This sequence belongs to the methyltransferase superfamily. RNA methyltransferase RsmG family.

It is found in the cytoplasm. It carries out the reaction guanosine(527) in 16S rRNA + S-adenosyl-L-methionine = N(7)-methylguanosine(527) in 16S rRNA + S-adenosyl-L-homocysteine. Specifically methylates the N7 position of guanine in position 527 of 16S rRNA. The polypeptide is Ribosomal RNA small subunit methyltransferase G (Bordetella avium (strain 197N)).